Consider the following 385-residue polypeptide: 8-amino-7-oxononanoate synthase (385 aa).

Residue Arg-21 participates in substrate binding. Gly-108 to Phe-109 serves as a coordination point for pyridoxal 5'-phosphate. His-133 is a substrate binding site. Residues Ser-179, His-207, and Thr-233 each contribute to the pyridoxal 5'-phosphate site. Lys-236 carries the N6-(pyridoxal phosphate)lysine modification. Thr-352 serves as a coordination point for substrate.

It belongs to the class-II pyridoxal-phosphate-dependent aminotransferase family. BioF subfamily. Homodimer. Requires pyridoxal 5'-phosphate as cofactor.

It carries out the reaction 6-carboxyhexanoyl-[ACP] + L-alanine + H(+) = (8S)-8-amino-7-oxononanoate + holo-[ACP] + CO2. It functions in the pathway cofactor biosynthesis; biotin biosynthesis. Functionally, catalyzes the decarboxylative condensation of pimeloyl-[acyl-carrier protein] and L-alanine to produce 8-amino-7-oxononanoate (AON), [acyl-carrier protein], and carbon dioxide. This chain is 8-amino-7-oxononanoate synthase, found in Salmonella schwarzengrund (strain CVM19633).